We begin with the raw amino-acid sequence, 185 residues long: Ribosome-recycling factor (185 aa).

It belongs to the RRF family.

Its subcellular location is the cytoplasm. Responsible for the release of ribosomes from messenger RNA at the termination of protein biosynthesis. May increase the efficiency of translation by recycling ribosomes from one round of translation to another. The sequence is that of Ribosome-recycling factor from Streptococcus mutans serotype c (strain ATCC 700610 / UA159).